The sequence spans 214 residues: Adenylate kinase (214 aa).

10 to 15 is a binding site for ATP; it reads GAGKGT. The segment at 30–59 is NMP; the sequence is STGDMFREAVASKSELGKKVEEILKRGDLV. AMP contacts are provided by residues Thr31, Arg36, 57–59, 85–88, and Gln92; these read DLV and GFPR. Positions 126–163 are LID; that stretch reads NRRICSNCGKIYNLITLPPKVDGKCDVCGGTLYQREDD. Position 127 (Arg127) interacts with ATP. Zn(2+) contacts are provided by Cys130 and Cys133. 136-137 is an ATP binding site; sequence IY. Positions 150 and 153 each coordinate Zn(2+). Residues Arg160 and Arg171 each coordinate AMP. Leu199 provides a ligand contact to ATP.

This sequence belongs to the adenylate kinase family. In terms of assembly, monomer.

The protein localises to the cytoplasm. The enzyme catalyses AMP + ATP = 2 ADP. The protein operates within purine metabolism; AMP biosynthesis via salvage pathway; AMP from ADP: step 1/1. In terms of biological role, catalyzes the reversible transfer of the terminal phosphate group between ATP and AMP. Plays an important role in cellular energy homeostasis and in adenine nucleotide metabolism. The sequence is that of Adenylate kinase from Thermosipho africanus (strain TCF52B).